We begin with the raw amino-acid sequence, 217 residues long: GrpE protein homolog 1, mitochondrial (217 aa).

Residues 1-27 constitute a mitochondrion transit peptide; sequence MAARCVRLARRSLPALALSFRPSPRLL. At Lys-94 the chain carries N6-acetyllysine; alternate. Position 94 is an N6-succinyllysine; alternate (Lys-94). The residue at position 100 (Lys-100) is an N6-acetyllysine. Residue Lys-120 is modified to N6-succinyllysine. At Lys-215 the chain carries N6-acetyllysine; alternate. An N6-succinyllysine; alternate modification is found at Lys-215.

The protein belongs to the GrpE family. In terms of assembly, probable component of the PAM complex at least composed of a mitochondrial HSP70 protein, GRPEL1 or GRPEL2, TIMM44, TIMM16/PAM16 and TIMM14/DNAJC19. Binds to HSP70, HSC70 and HSJ1B. In terms of tissue distribution, ubiquitous. Particularly abundant in heart, kidney and liver.

It localises to the mitochondrion matrix. In terms of biological role, essential component of the PAM complex, a complex required for the translocation of transit peptide-containing proteins from the inner membrane into the mitochondrial matrix in an ATP-dependent manner. Seems to control the nucleotide-dependent binding of mitochondrial HSP70 to substrate proteins. This is GrpE protein homolog 1, mitochondrial (Grpel1) from Rattus norvegicus (Rat).